The primary structure comprises 427 residues: Trigger factor (427 aa).

Residues Gly-163–Pro-248 enclose the PPIase FKBP-type domain.

Belongs to the FKBP-type PPIase family. Tig subfamily.

The protein resides in the cytoplasm. The catalysed reaction is [protein]-peptidylproline (omega=180) = [protein]-peptidylproline (omega=0). Its function is as follows. Involved in protein export. Acts as a chaperone by maintaining the newly synthesized protein in an open conformation. Functions as a peptidyl-prolyl cis-trans isomerase. The chain is Trigger factor from Clostridium botulinum (strain Alaska E43 / Type E3).